Reading from the N-terminus, the 70-residue chain is U2-agatoxin-Ao1b (70 aa).

Positions 1-20 (MRAIISLILISAMVFSMIAA) are cleaved as a signal peptide. Positions 21-34 (VPEEEGLQLSEDER) are excised as a propeptide. Cystine bridges form between Cys37/Cys53, Cys44/Cys58, and Cys52/Cys68. Leu69 carries the leucine amide modification.

The protein belongs to the neurotoxin 01 (U2-agtx) family. As to expression, expressed by the venom gland.

It is found in the secreted. Functionally, insect active toxin causing rapid but reversible paralysis in crickets. No activity shown in mammals. Does not show effect on mammalian voltage-gated calcium channels. This chain is U2-agatoxin-Ao1b, found in Agelena orientalis (Funnel-web spider).